The sequence spans 239 residues: MAINVIINGINGKIGRVVKENITAQSDLELVSGTGRQDDLAKTIQTTHADVVIDFTTPQSVFHNAEIIIQSGARPVIGTTGLTLEQIALLDKQCRNKKLGAIVAPNFSVGAVLMMKYAKEAAHYFPDVEIIEMHHSQKIDAPSGTAIKTAQMIGEMRSSKKDEPFKDRARGEIKNGIPIHSIRLPGLFSHQSVIFGSNGETLTIRHDGMDRNCTMPGIFMACRKVMELDYLVYGLENLL.

Residues 9–14 (GINGKI), 78–80 (GTT), and 104–107 (APNF) contribute to the NAD(+) site. His134 serves as the catalytic Proton donor/acceptor. His135 lines the (S)-2,3,4,5-tetrahydrodipicolinate pocket. Lys138 (proton donor) is an active-site residue. 144–145 (GT) serves as a coordination point for (S)-2,3,4,5-tetrahydrodipicolinate.

It belongs to the DapB family.

Its subcellular location is the cytoplasm. The catalysed reaction is (S)-2,3,4,5-tetrahydrodipicolinate + NAD(+) + H2O = (2S,4S)-4-hydroxy-2,3,4,5-tetrahydrodipicolinate + NADH + H(+). It carries out the reaction (S)-2,3,4,5-tetrahydrodipicolinate + NADP(+) + H2O = (2S,4S)-4-hydroxy-2,3,4,5-tetrahydrodipicolinate + NADPH + H(+). It participates in amino-acid biosynthesis; L-lysine biosynthesis via DAP pathway; (S)-tetrahydrodipicolinate from L-aspartate: step 4/4. Catalyzes the conversion of 4-hydroxy-tetrahydrodipicolinate (HTPA) to tetrahydrodipicolinate. The protein is 4-hydroxy-tetrahydrodipicolinate reductase of Coxiella burnetii (strain CbuG_Q212) (Coxiella burnetii (strain Q212)).